The following is a 647-amino-acid chain: tRNA 5-methylaminomethyl-2-thiouridine biosynthesis bifunctional protein MnmC (647 aa).

The tRNA (mnm(5)s(2)U34)-methyltransferase stretch occupies residues 1–227; the sequence is MLTWKNNLTP…KREMLIGSYS (227 aa). Residues 256 to 647 are FAD-dependent cmnm(5)s(2)U34 oxidoreductase; that stretch reads VGAGIAGTTL…ARFLYRKVRK (392 aa).

This sequence in the N-terminal section; belongs to the methyltransferase superfamily. tRNA (mnm(5)s(2)U34)-methyltransferase family. The protein in the C-terminal section; belongs to the DAO family. It depends on FAD as a cofactor.

It is found in the cytoplasm. It catalyses the reaction 5-aminomethyl-2-thiouridine(34) in tRNA + S-adenosyl-L-methionine = 5-methylaminomethyl-2-thiouridine(34) in tRNA + S-adenosyl-L-homocysteine + H(+). Functionally, catalyzes the last two steps in the biosynthesis of 5-methylaminomethyl-2-thiouridine (mnm(5)s(2)U) at the wobble position (U34) in tRNA. Catalyzes the FAD-dependent demodification of cmnm(5)s(2)U34 to nm(5)s(2)U34, followed by the transfer of a methyl group from S-adenosyl-L-methionine to nm(5)s(2)U34, to form mnm(5)s(2)U34. The sequence is that of tRNA 5-methylaminomethyl-2-thiouridine biosynthesis bifunctional protein MnmC from Leptospira interrogans serogroup Icterohaemorrhagiae serovar copenhageni (strain Fiocruz L1-130).